Here is a 379-residue protein sequence, read N- to C-terminus: Glutamate 5-kinase (379 aa).

Position 17 (lysine 17) interacts with ATP. 3 residues coordinate substrate: serine 57, aspartate 144, and asparagine 156. 176–177 lines the ATP pocket; sequence SD. Residues 282 to 359 enclose the PUA domain; the sequence is SGILMIDQGA…EEIESILGYE (78 aa).

Belongs to the glutamate 5-kinase family.

The protein localises to the cytoplasm. The enzyme catalyses L-glutamate + ATP = L-glutamyl 5-phosphate + ADP. The protein operates within amino-acid biosynthesis; L-proline biosynthesis; L-glutamate 5-semialdehyde from L-glutamate: step 1/2. Catalyzes the transfer of a phosphate group to glutamate to form L-glutamate 5-phosphate. The sequence is that of Glutamate 5-kinase from Bartonella henselae (strain ATCC 49882 / DSM 28221 / CCUG 30454 / Houston 1) (Rochalimaea henselae).